A 161-amino-acid polypeptide reads, in one-letter code: Nucleotide-binding protein swp_1151 (161 aa).

This sequence belongs to the YajQ family.

Functionally, nucleotide-binding protein. In Shewanella piezotolerans (strain WP3 / JCM 13877), this protein is Nucleotide-binding protein swp_1151.